We begin with the raw amino-acid sequence, 380 residues long: Queuine tRNA-ribosyltransferase (380 aa).

The Proton acceptor role is filled by aspartate 96. Residues 96-100 (DSGGF), aspartate 150, glutamine 193, and glycine 220 each bind substrate. Positions 251–257 (GVGAPDS) are RNA binding. The active-site Nucleophile is the aspartate 270. The tract at residues 275–279 (TRIAR) is RNA binding; important for wobble base 34 recognition. Residues cysteine 308, cysteine 310, cysteine 313, and histidine 339 each coordinate Zn(2+).

This sequence belongs to the queuine tRNA-ribosyltransferase family. As to quaternary structure, homodimer. Within each dimer, one monomer is responsible for RNA recognition and catalysis, while the other monomer binds to the replacement base PreQ1. The cofactor is Zn(2+).

The catalysed reaction is 7-aminomethyl-7-carbaguanine + guanosine(34) in tRNA = 7-aminomethyl-7-carbaguanosine(34) in tRNA + guanine. It participates in tRNA modification; tRNA-queuosine biosynthesis. In terms of biological role, catalyzes the base-exchange of a guanine (G) residue with the queuine precursor 7-aminomethyl-7-deazaguanine (PreQ1) at position 34 (anticodon wobble position) in tRNAs with GU(N) anticodons (tRNA-Asp, -Asn, -His and -Tyr). Catalysis occurs through a double-displacement mechanism. The nucleophile active site attacks the C1' of nucleotide 34 to detach the guanine base from the RNA, forming a covalent enzyme-RNA intermediate. The proton acceptor active site deprotonates the incoming PreQ1, allowing a nucleophilic attack on the C1' of the ribose to form the product. After dissociation, two additional enzymatic reactions on the tRNA convert PreQ1 to queuine (Q), resulting in the hypermodified nucleoside queuosine (7-(((4,5-cis-dihydroxy-2-cyclopenten-1-yl)amino)methyl)-7-deazaguanosine). This chain is Queuine tRNA-ribosyltransferase, found in Streptococcus pyogenes serotype M3 (strain ATCC BAA-595 / MGAS315).